Consider the following 154-residue polypeptide: MGLSDGEWTLVLNAWGKVEADVAGHGQEVLIRLFTGHPETLEKFDKFKHLKTGAEMKASEDLKKHGNTVLTALGGILKKKGHHEAEVKHLAESHANKHKIPVKYLEFISDAIIHVLHAKHPSDFGADAQGAMSKALELFRNDMAAQYKVLGFQG.

The 147-residue stretch at 2-148 folds into the Globin domain; the sequence is GLSDGEWTLV…FRNDMAAQYK (147 aa). A Phosphoserine modification is found at Ser4. His65 contributes to the nitrite binding site. Residue His65 coordinates O2. Thr68 is subject to Phosphothreonine. A heme b-binding site is contributed by His94.

Belongs to the globin family. As to quaternary structure, monomeric.

The protein localises to the cytoplasm. It is found in the sarcoplasm. The enzyme catalyses Fe(III)-heme b-[protein] + nitric oxide + H2O = Fe(II)-heme b-[protein] + nitrite + 2 H(+). The catalysed reaction is H2O2 + AH2 = A + 2 H2O. Functionally, monomeric heme protein which primary function is to store oxygen and facilitate its diffusion within muscle tissues. Reversibly binds oxygen through a pentacoordinated heme iron and enables its timely and efficient release as needed during periods of heightened demand. Depending on the oxidative conditions of tissues and cells, and in addition to its ability to bind oxygen, it also has a nitrite reductase activity whereby it regulates the production of bioactive nitric oxide. Under stress conditions, like hypoxia and anoxia, it also protects cells against reactive oxygen species thanks to its pseudoperoxidase activity. The polypeptide is Myoglobin (Capra hircus (Goat)).